Consider the following 63-residue polypeptide: Large ribosomal subunit protein uL29 (63 aa).

This sequence belongs to the universal ribosomal protein uL29 family.

The polypeptide is Large ribosomal subunit protein uL29 (Shewanella loihica (strain ATCC BAA-1088 / PV-4)).